We begin with the raw amino-acid sequence, 295 residues long: Protoheme IX farnesyltransferase (295 aa).

The next 9 membrane-spanning stretches (helical) occupy residues 31 to 51 (GLVMITCAGGMWLAPGQIGAA), 54 to 74 (VLTVLATAVVVGAANALNCYL), 98 to 118 (FVALGLGIAAPAFAIPILSLA), 121 to 141 (GLTALLALVALLTYVLVYTPM), 147 to 167 (TALFVGAVPGAIPPLMGWTSV), 173 to 193 (AGGLALFGLLFAWQLPHFLAI), 220 to 240 (LWMALTTILLLPASLALVPLG), 245 to 265 (GYAITAAVLGLALSAYAISGI), and 273 to 293 (ARTFFLGTLVHLTVLFVALFL).

Belongs to the UbiA prenyltransferase family. Protoheme IX farnesyltransferase subfamily.

The protein localises to the cell inner membrane. The catalysed reaction is heme b + (2E,6E)-farnesyl diphosphate + H2O = Fe(II)-heme o + diphosphate. It functions in the pathway porphyrin-containing compound metabolism; heme O biosynthesis; heme O from protoheme: step 1/1. Functionally, converts heme B (protoheme IX) to heme O by substitution of the vinyl group on carbon 2 of heme B porphyrin ring with a hydroxyethyl farnesyl side group. The polypeptide is Protoheme IX farnesyltransferase (Anaeromyxobacter dehalogenans (strain 2CP-C)).